Consider the following 423-residue polypeptide: Aspartic protease-like protein pytH (423 aa).

Positions 1-16 (MWLSVALLTLLDGALA) are cleaved as a signal peptide. The 379-residue stretch at 38–416 (TTDAIQIGTP…DFDKLRVGLA (379 aa)) folds into the Peptidase A1 domain. The active site involves aspartate 56. N-linked (GlcNAc...) asparagine glycans are attached at residues asparagine 88, asparagine 97, asparagine 168, asparagine 196, asparagine 231, and asparagine 279. Aspartate 291 is an active-site residue. Residue asparagine 330 is glycosylated (N-linked (GlcNAc...) asparagine). Cysteine 338 and cysteine 377 form a disulfide bridge.

It belongs to the peptidase A1 family.

The protein operates within secondary metabolite biosynthesis. In terms of biological role, aspartic protease-like protein; part of the gene cluster that mediates the biosynthesis of pyranterreones, a family of antioxidative compounds. The first step of pyranonigrins biosynthesis is performed by the hybrid PKS-NRPS synthetase pytA that condenses 4 malonyl-CoA units ato the acetyl starter unit by the modular PKS of pytA. The acyl chain is then connected to an L-serine through the amide bond by the modular NRPS of pytA. A tetramic acid is formed and released from the PKS-NRPS pytA to give pyranterreone 5 with the help of the thioesterase pytI. Pyranterreone 5 could be methylated by pytC to afford pyranterreone 6. Both pyranterreones 5 and 6 are subsequently oxidized by the FAD-linked oxidoreductase pytB and the cytochrome P450 monooxygenase pytD to form the fused gamma-pyrone core, resulting in pyranterreones 7 and 11, respectively. The hydroxy group at C-8 of pyranterreones 7 and 11 are dehydrated by the aspartyl protease pytH to form a delta-7 double bond to give pyranterreones 3 and 1, 2 accordingly. The exo-methylene of pyranterreone 3 could be reduced into a pendant methyl by reductase pytE to provide pyranterreone 4, also known as cordylactam. Pyranterreone 4 can be reconverted to pyranterreone 3 through pytB-catalyzed dehydrogenation or further oxidized to pyranterreones 9 and 10. The sequence is that of Aspartic protease-like protein pytH from Aspergillus terreus (strain NIH 2624 / FGSC A1156).